The sequence spans 509 residues: GMP synthase [glutamine-hydrolyzing] (509 aa).

Residues 4-193 (KILILDFGSQ…VVHICGCSQD (190 aa)) enclose the Glutamine amidotransferase type-1 domain. The Nucleophile role is filled by C79. Catalysis depends on residues H167 and E169. The region spanning 194-384 (WTPDAFVETT…LGIDDIILKR (191 aa)) is the GMPS ATP-PPase domain. Residue 221–227 (SGGVDSS) participates in ATP binding.

Homodimer.

The enzyme catalyses XMP + L-glutamine + ATP + H2O = GMP + L-glutamate + AMP + diphosphate + 2 H(+). It participates in purine metabolism; GMP biosynthesis; GMP from XMP (L-Gln route): step 1/1. Catalyzes the synthesis of GMP from XMP. This chain is GMP synthase [glutamine-hydrolyzing], found in Cytophaga hutchinsonii (strain ATCC 33406 / DSM 1761 / CIP 103989 / NBRC 15051 / NCIMB 9469 / D465).